The following is a 663-amino-acid chain: Probable rhamnogalacturonate lyase B (663 aa).

A signal peptide spans 1–19 (MRLRTSLGVASACASVASA). N-linked (GlcNAc...) asparagine glycosylation is found at asparagine 27, asparagine 110, asparagine 143, asparagine 239, asparagine 285, asparagine 495, asparagine 535, asparagine 569, asparagine 597, and asparagine 638.

It belongs to the polysaccharide lyase 4 family.

Its subcellular location is the secreted. It carries out the reaction Endotype eliminative cleavage of L-alpha-rhamnopyranosyl-(1-&gt;4)-alpha-D-galactopyranosyluronic acid bonds of rhamnogalacturonan I domains in ramified hairy regions of pectin leaving L-rhamnopyranose at the reducing end and 4-deoxy-4,5-unsaturated D-galactopyranosyluronic acid at the non-reducing end.. Pectinolytic enzymes consist of four classes of enzymes: pectin lyase, polygalacturonase, pectin methylesterase and rhamnogalacturonase. Degrades the rhamnogalacturonan I (RG-I) backbone of pectin. The chain is Probable rhamnogalacturonate lyase B (rglB) from Aspergillus flavus (strain ATCC 200026 / FGSC A1120 / IAM 13836 / NRRL 3357 / JCM 12722 / SRRC 167).